Here is a 464-residue protein sequence, read N- to C-terminus: Trigger factor (464 aa).

Residues 166-245 (GDFLTIDITA…VKAVKERELP (80 aa)) form the PPIase FKBP-type domain. The disordered stretch occupies residues 426–464 (FVRPGGEEEAPAAEVTEADTAEGEATEVPAEDEKAEAKA). Residues 432-455 (EEEAPAAEVTEADTAEGEATEVPA) are compositionally biased toward acidic residues.

The protein belongs to the FKBP-type PPIase family. Tig subfamily.

The protein resides in the cytoplasm. It carries out the reaction [protein]-peptidylproline (omega=180) = [protein]-peptidylproline (omega=0). Its function is as follows. Involved in protein export. Acts as a chaperone by maintaining the newly synthesized protein in an open conformation. Functions as a peptidyl-prolyl cis-trans isomerase. This Pseudarthrobacter chlorophenolicus (strain ATCC 700700 / DSM 12829 / CIP 107037 / JCM 12360 / KCTC 9906 / NCIMB 13794 / A6) (Arthrobacter chlorophenolicus) protein is Trigger factor.